We begin with the raw amino-acid sequence, 102 residues long: MVRVSTFAAILAMALSVTANVTPNDAGAKNVGTGNGQQFITGGCVNGTDCQSRCCAGNGENKGVCSNEVAANQNGKTGCGFEDPNKAQTVKEAKEQVKKQGF.

The first 19 residues, 1-19, serve as a signal peptide directing secretion; the sequence is MVRVSTFAAILAMALSVTA. An N-linked (GlcNAc...) asparagine glycan is attached at Asn-46.

The protein localises to the secreted. Secreted effector involved in biotrophic colonization of plant cells. This chain is Biotrophy-associated secreted protein 2, found in Pyricularia oryzae (strain 70-15 / ATCC MYA-4617 / FGSC 8958) (Rice blast fungus).